The sequence spans 369 residues: S-(hydroxymethyl)glutathione dehydrogenase (369 aa).

C40, H62, C92, C95, C98, C106, and C169 together coordinate Zn(2+).

Belongs to the zinc-containing alcohol dehydrogenase family. Class-III subfamily. In terms of assembly, homodimer. Zn(2+) serves as cofactor.

Its subcellular location is the cytoplasm. The enzyme catalyses S-(hydroxymethyl)glutathione + NADP(+) = S-formylglutathione + NADPH + H(+). It carries out the reaction S-(hydroxymethyl)glutathione + NAD(+) = S-formylglutathione + NADH + H(+). The catalysed reaction is a primary alcohol + NAD(+) = an aldehyde + NADH + H(+). It catalyses the reaction a secondary alcohol + NAD(+) = a ketone + NADH + H(+). The enzyme catalyses S-nitrosoglutathione + NADH + H(+) = S-(hydroxysulfenamide)glutathione + NAD(+). Has high formaldehyde dehydrogenase activity in the presence of glutathione and catalyzes the oxidation of normal alcohols in a reaction that is not GSH-dependent. In addition, hemithiolacetals other than those formed from GSH, including omega-thiol fatty acids, also are substrates. Also acts as a S-nitroso-glutathione reductase by catalyzing the NADH-dependent reduction of S-nitrosoglutathione. The sequence is that of S-(hydroxymethyl)glutathione dehydrogenase (frmA) from Escherichia coli O1:K1 / APEC.